Reading from the N-terminus, the 80-residue chain is Penaeidin-3 (80 aa).

The signal sequence occupies residues 1–19 (MRLVVCLVYLVSFALVCQG). Position 20 is a pyrrolidone carboxylic acid (Gln-20). 3 cysteine pairs are disulfide-bonded: Cys-54–Cys-67, Cys-57–Cys-74, and Cys-68–Cys-75.

It belongs to the penaeidin family. In terms of processing, the N-terminus forms pyrrolidone carboxylic acid. In terms of tissue distribution, strongly expressed in hemocytes, and to a lesser extent in heart, muscle, gills, intestine and eyestalk. Lowest expression in hepatopancreas.

The protein resides in the cytoplasmic granule. Functionally, antibacterial and antifungal activity. Presents chitin-binding activity. The chain is Penaeidin-3 from Penaeus indicus (Indian white prawn).